The primary structure comprises 513 residues: Putative ribose/galactose/methyl galactoside import ATP-binding protein 2 (513 aa).

2 consecutive ABC transporter domains span residues 24–260 (LSAE…VGRE) and 270–510 (VPIG…VMEL). Residue 56–63 (GENGAGKS) coordinates ATP.

Belongs to the ABC transporter superfamily. Carbohydrate importer 2 (CUT2) (TC 3.A.1.2) family.

It localises to the cell inner membrane. It catalyses the reaction D-ribose(out) + ATP + H2O = D-ribose(in) + ADP + phosphate + H(+). It carries out the reaction D-galactose(out) + ATP + H2O = D-galactose(in) + ADP + phosphate + H(+). Part of an ABC transporter complex involved in carbohydrate import. Could be involved in ribose, galactose and/or methyl galactoside import. Responsible for energy coupling to the transport system. The sequence is that of Putative ribose/galactose/methyl galactoside import ATP-binding protein 2 from Rhizobium etli (strain ATCC 51251 / DSM 11541 / JCM 21823 / NBRC 15573 / CFN 42).